The chain runs to 464 residues: Chromosomal replication initiator protein DnaA (464 aa).

Residues 1–90 (MNNDNTEVLE…KYWQDEDQSI (90 aa)) form a domain I, interacts with DnaA modulators region. Residues 90–126 (ICSVDICVVSNQDPNLLVDIKDRVDRGIKGNCDNVSS) form a domain II region. Residues 127 to 345 (PLDPRFTFDN…GALNKVVAHS (219 aa)) are domain III, AAA+ region. 4 residues coordinate ATP: Gly173, Gly175, Lys176, and Thr177. The segment at 346-464 (SLVGCSITLD…DINLLNRMLR (119 aa)) is domain IV, binds dsDNA.

This sequence belongs to the DnaA family. As to quaternary structure, oligomerizes as a right-handed, spiral filament on DNA at oriC.

The protein resides in the cytoplasm. Its function is as follows. Plays an essential role in the initiation and regulation of chromosomal replication. ATP-DnaA binds to the origin of replication (oriC) to initiate formation of the DNA replication initiation complex once per cell cycle. Binds the DnaA box (a 9 base pair repeat at the origin) and separates the double-stranded (ds)DNA. Forms a right-handed helical filament on oriC DNA; dsDNA binds to the exterior of the filament while single-stranded (ss)DNA is stabiized in the filament's interior. The ATP-DnaA-oriC complex binds and stabilizes one strand of the AT-rich DNA unwinding element (DUE), permitting loading of DNA polymerase. After initiation quickly degrades to an ADP-DnaA complex that is not apt for DNA replication. Binds acidic phospholipids. The protein is Chromosomal replication initiator protein DnaA of Ehrlichia ruminantium (strain Gardel).